Reading from the N-terminus, the 749-residue chain is Catalase-peroxidase (749 aa).

Basic and acidic residues predominate over residues 1-12 (MSSDTSDTRPPH). Residues 1-40 (MSSDTSDTRPPHSDSGTQSNSESENPIIDSPEPKAHAPLT) are disordered. The span at 14–24 (DSGTQSNSESE) shows a compositional bias: polar residues. The segment at residues 113–240 (WHAAGTYRIF…FGATTMGLIY (128 aa)) is a cross-link (tryptophyl-tyrosyl-methioninium (Trp-Tyr) (with M-266)). Catalysis depends on H114, which acts as the Proton acceptor. The tryptophyl-tyrosyl-methioninium (Tyr-Met) (with W-113) cross-link spans 240 to 266 (YVNPEGPEGKPDPLAAAHDIRETFGRM). A heme b-binding site is contributed by H281.

Belongs to the peroxidase family. Peroxidase/catalase subfamily. Homodimer or homotetramer. Heme b is required as a cofactor. Formation of the three residue Trp-Tyr-Met cross-link is important for the catalase, but not the peroxidase activity of the enzyme.

It carries out the reaction H2O2 + AH2 = A + 2 H2O. It catalyses the reaction 2 H2O2 = O2 + 2 H2O. Bifunctional enzyme with both catalase and broad-spectrum peroxidase activity. The polypeptide is Catalase-peroxidase (Mycobacterium sp. (strain JLS)).